The primary structure comprises 72 residues: Dermaseptin AA-3-4 (72 aa).

Residues 1-22 form the signal peptide; that stretch reads MAFLKKSLFLVLFLGLVSLSIC. A propeptide spanning residues 23 to 43 is cleaved from the precursor; the sequence is DEEKRENEDEEEQEDDEQSEE. The tract at residues 24–45 is disordered; it reads EEKRENEDEEEQEDDEQSEEKR. Residues 30 to 41 are compositionally biased toward acidic residues; the sequence is EDEEEQEDDEQS.

This sequence belongs to the frog skin active peptide (FSAP) family. In terms of tissue distribution, expressed by the skin glands.

The protein localises to the secreted. Possesses a potent antimicrobial activity against Gram-positive and Gram-negative bacteria. Probably acts by disturbing membrane functions with its amphipathic structure. The polypeptide is Dermaseptin AA-3-4 (Agalychnis annae (Blue-sided leaf frog)).